The following is a 253-amino-acid chain: Triosephosphate isomerase, cytosolic (253 aa).

Residues Asn-10 and Lys-12 each coordinate substrate. Residue His-96 is the Electrophile of the active site. The active-site Proton acceptor is Glu-166.

This sequence belongs to the triosephosphate isomerase family. As to quaternary structure, homodimer.

The protein localises to the cytoplasm. It catalyses the reaction D-glyceraldehyde 3-phosphate = dihydroxyacetone phosphate. It participates in carbohydrate biosynthesis; gluconeogenesis. Its pathway is carbohydrate degradation; glycolysis; D-glyceraldehyde 3-phosphate from glycerone phosphate: step 1/1. The sequence is that of Triosephosphate isomerase, cytosolic (TPI) from Oryza sativa subsp. japonica (Rice).